The chain runs to 503 residues: GMP synthase [glutamine-hydrolyzing] (503 aa).

In terms of domain architecture, Glutamine amidotransferase type-1 spans 3-189 (PVLVVDFGSQ…AFLSSFAAPN (187 aa)). Catalysis depends on C80, which acts as the Nucleophile. Active-site residues include H165 and E167. One can recognise a GMPS ATP-PPase domain in the interval 190-380 (WDPEQTICGT…LGIPKHIVHR (191 aa)). 217–223 (SGGVDSV) lines the ATP pocket.

As to quaternary structure, homodimer.

It catalyses the reaction XMP + L-glutamine + ATP + H2O = GMP + L-glutamate + AMP + diphosphate + 2 H(+). The protein operates within purine metabolism; GMP biosynthesis; GMP from XMP (L-Gln route): step 1/1. Its function is as follows. Catalyzes the synthesis of GMP from XMP. The sequence is that of GMP synthase [glutamine-hydrolyzing] from Tropheryma whipplei (strain TW08/27) (Whipple's bacillus).